The sequence spans 306 residues: Methylated RNA-binding protein 1 (306 aa).

The YTH domain occupies 155–290 (SRFFVIKSSS…SIGISIINLF (136 aa)). RNA is bound by residues 161–163 (KSS), N207, and W231.

RNA-binding protein that acts as a post-transcriptional regulator of phosphate metabolism by binding to the 3'-UTR region of PHO4 mRNA, decreasing its stability. Acts by recognizing and binding N6-methyladenosine (m6A)-containing RNAs, a modification present at internal sites of mRNAs and some non-coding RNAs. The protein is Methylated RNA-binding protein 1 of Saccharomyces cerevisiae (strain ATCC 204508 / S288c) (Baker's yeast).